The primary structure comprises 662 residues: Protein Aster-C (662 aa).

Residues M1–V33 are disordered. In terms of domain architecture, GRAM spans E70 to V176. A disordered region spans residues V212–K294. Positions V240–A250 are enriched in polar residues. The span at L265–V276 shows a compositional bias: basic and acidic residues. The VASt domain maps to Q326–S497. The disordered stretch occupies residues H506 to R530. Over residues S507–L516 the composition is skewed to basic residues. The helical transmembrane segment at L557–L577 threads the bilayer.

In terms of tissue distribution, highly expressed in the liver. Also found in the testis.

It is found in the endoplasmic reticulum membrane. Its subcellular location is the cell membrane. Its function is as follows. Cholesterol transporter that mediates non-vesicular transport of cholesterol from the plasma membrane (PM) to the endoplasmic reticulum (ER). Contains unique domains for binding cholesterol and the PM, thereby serving as a molecular bridge for the transfer of cholesterol from the PM to the ER. Plays a crucial role in cholesterol homeostasis and has the unique ability to localize to the PM based on the level of membrane cholesterol. In lipid-poor conditions localizes to the ER membrane and in response to excess cholesterol in the PM is recruited to the endoplasmic reticulum-plasma membrane contact sites (EPCS) which is mediated by the GRAM domain. At the EPCS, the sterol-binding VASt/ASTER domain binds to the cholesterol in the PM and facilitates its transfer from the PM to ER. This Mus musculus (Mouse) protein is Protein Aster-C (Gramd1c).